Reading from the N-terminus, the 471-residue chain is Delta(24(24(1)))-sterol reductase erg4A (471 aa).

Residue Asn-15 is glycosylated (N-linked (GlcNAc...) asparagine). Transmembrane regions (helical) follow at residues 33–53 (VTLI…GAVL), 89–109 (WTIY…LPGV), 130–150 (AVSS…TGVL), 159–179 (FGPL…VAYI), 216–236 (MFFE…GTAL), 244–264 (LVAG…NACA), 282–302 (GFML…HCTL), and 313–333 (HWNP…YWVW). Residues Lys-340, Arg-344, Leu-380, and 392–393 (HY) contribute to the NADP(+) site. Residues 397–417 (VFFAISWGLITGFNSPFPWFY) form a helical membrane-spanning segment. NADP(+)-binding positions include Asp-432, 436–440 (CRERY), and Tyr-447.

It belongs to the ERG4/ERG24 family.

The protein resides in the endoplasmic reticulum membrane. It catalyses the reaction ergosterol + NADP(+) = ergosta-5,7,22,24(28)-tetraen-3beta-ol + NADPH + H(+). It participates in steroid metabolism; ergosterol biosynthesis. In terms of biological role, delta(24(24(1)))-sterol reductase; part of the third module of ergosterol biosynthesis pathway that includes the late steps of the pathway. Catalyzes the last step of ergosterol biosynthesis by converting ergosta-5,7,22,24(28)-tetraen-3beta-ol into ergosterol. The third module or late pathway involves the ergosterol synthesis itself through consecutive reactions that mainly occur in the endoplasmic reticulum (ER) membrane. Firstly, the squalene synthase erg9 catalyzes the condensation of 2 farnesyl pyrophosphate moieties to form squalene, which is the precursor of all steroids. Squalene synthase is crucial for balancing the incorporation of farnesyl diphosphate (FPP) into sterol and nonsterol isoprene synthesis. Secondly, squalene is converted into lanosterol by the consecutive action of the squalene epoxidase erg1 and the lanosterol synthase erg7. Then, the delta(24)-sterol C-methyltransferase erg6 methylates lanosterol at C-24 to produce eburicol. Eburicol is the substrate of the sterol 14-alpha demethylase encoded by cyp51A and cyp51B, to yield 4,4,24-trimethyl ergosta-8,14,24(28)-trienol. The C-14 reductase erg24 then reduces the C14=C15 double bond which leads to 4,4-dimethylfecosterol. A sequence of further demethylations at C-4, involving the C-4 demethylation complex containing the C-4 methylsterol oxidases erg25A or erg25B, the sterol-4-alpha-carboxylate 3-dehydrogenase erg26 and the 3-keto-steroid reductase erg27, leads to the production of fecosterol via 4-methylfecosterol. The C-8 sterol isomerase erg2 then catalyzes the reaction which results in unsaturation at C-7 in the B ring of sterols and thus converts fecosterol to episterol. The sterol-C5-desaturase erg3B then catalyzes the introduction of a C-5 double bond in the B ring to produce 5-dehydroepisterol. The 2 other sterol-C5-desaturases, erg3A and erg3C, seem to be less important in ergosterol biosynthesis. The C-22 sterol desaturase erg5 further converts 5-dehydroepisterol into ergosta-5,7,22,24(28)-tetraen-3beta-ol by forming the C-22(23) double bond in the sterol side chain. Finally, ergosta-5,7,22,24(28)-tetraen-3beta-ol is substrate of the C-24(28) sterol reductases erg4A and erg4B to produce ergosterol. Possible alternative sterol biosynthetic pathways might exist from fecosterol to ergosterol, depending on the activities of the erg3 isoforms. The protein is Delta(24(24(1)))-sterol reductase erg4A of Aspergillus fumigatus (strain ATCC MYA-4609 / CBS 101355 / FGSC A1100 / Af293) (Neosartorya fumigata).